The sequence spans 513 residues: Fructose import ATP-binding protein FruK (513 aa).

ABC transporter domains follow at residues 8-244 and 262-505; these read VVMK…IGKS and PGEK…IANT. 40-47 serves as a coordination point for ATP; the sequence is GENGAGKS.

It belongs to the ABC transporter superfamily. In terms of assembly, the complex is composed of an ATP-binding protein (FruK), two transmembrane proteins (FruF and FruG) and a solute-binding protein (FruE).

The protein localises to the cell membrane. The enzyme catalyses D-fructose(out) + ATP + H2O = D-fructose(in) + ADP + phosphate + H(+). Functionally, part of the high-affinity ABC transporter complex FruEKFG involved in fructose uptake. Can also transport ribose and xylose, with lower affinity. Probably responsible for energy coupling to the transport system. The polypeptide is Fructose import ATP-binding protein FruK (Bifidobacterium longum (strain NCC 2705)).